A 225-amino-acid chain; its full sequence is 3-demethoxyubiquinol 3-hydroxylase (225 aa).

Residues 1 to 11 (MSVASTSSGFT) show a composition bias toward polar residues. Residues 1–20 (MSVASTSSGFTPFSRRRGPL) are disordered. 6 residues coordinate Fe cation: glutamate 74, glutamate 104, histidine 107, glutamate 156, glutamate 188, and histidine 191. The interval 181-203 (VSQMKDDEAQHRASAERAGGVPL) is disordered. A compositionally biased stretch (basic and acidic residues) spans 184 to 195 (MKDDEAQHRASA).

This sequence belongs to the COQ7 family. The cofactor is Fe cation.

It localises to the cell membrane. The catalysed reaction is a 5-methoxy-2-methyl-3-(all-trans-polyprenyl)benzene-1,4-diol + AH2 + O2 = a 3-demethylubiquinol + A + H2O. It participates in cofactor biosynthesis; ubiquinone biosynthesis. Functionally, catalyzes the hydroxylation of 2-nonaprenyl-3-methyl-6-methoxy-1,4-benzoquinol during ubiquinone biosynthesis. This Bordetella petrii (strain ATCC BAA-461 / DSM 12804 / CCUG 43448) protein is 3-demethoxyubiquinol 3-hydroxylase.